Here is a 261-residue protein sequence, read N- to C-terminus: 5'-nucleotidase SurE (261 aa).

A divalent metal cation contacts are provided by Asp-8, Asp-9, Ser-40, and Asn-94.

Belongs to the SurE nucleotidase family. A divalent metal cation serves as cofactor.

It localises to the cytoplasm. The enzyme catalyses a ribonucleoside 5'-phosphate + H2O = a ribonucleoside + phosphate. Nucleotidase that shows phosphatase activity on nucleoside 5'-monophosphates. The chain is 5'-nucleotidase SurE from Anaplasma marginale (strain St. Maries).